The chain runs to 345 residues: MKRCTKLKILNTFSVDVYAEKVIIINDEYSLLQLWKQSRDQDKFFLILGAGSNVLFLENYKGIVLLNRIKGIFVTENKVAWYLHVGAGEEWNTLVMYTIKRNMPGLENLVCIPGYVGAALIQNIGAYGVELSQMCEYVDVLDLNQGDKIRLYCHECCFRYRESIFKLNLYKYAILFVGLRINKHWKPVLSYSGLTHLNLNSITPRQIINTIIFLRYKKLPNPIIHGNVGSFFKNPVVDFKVVSFLLKKYSNIPYYFQEDGKVKLLAGWLIENCNLKGYILGEASVYYKQALVLINTRQKATGTEIAALALYVYNKVVDKFNIRLKPEVRLIGSFGEINPKKLFLK.

Positions 15-218 (VDVYAEKVII…NTIIFLRYKK (204 aa)) constitute an FAD-binding PCMH-type domain. Residue arginine 161 is part of the active site. Serine 230 serves as the catalytic Proton donor. Glutamate 327 is an active-site residue.

The protein belongs to the MurB family. FAD is required as a cofactor.

It is found in the cytoplasm. It catalyses the reaction UDP-N-acetyl-alpha-D-muramate + NADP(+) = UDP-N-acetyl-3-O-(1-carboxyvinyl)-alpha-D-glucosamine + NADPH + H(+). Its pathway is cell wall biogenesis; peptidoglycan biosynthesis. In terms of biological role, cell wall formation. The sequence is that of UDP-N-acetylenolpyruvoylglucosamine reductase from Blochmanniella floridana.